Consider the following 319-residue polypeptide: Malate dehydrogenase (319 aa).

NAD(+) contacts are provided by residues 10 to 15 (GAGQIG) and aspartate 34. 2 residues coordinate substrate: arginine 85 and arginine 91. Residues asparagine 98 and 121–123 (ITN) contribute to the NAD(+) site. Substrate contacts are provided by asparagine 123 and arginine 154. Catalysis depends on histidine 178, which acts as the Proton acceptor.

This sequence belongs to the LDH/MDH superfamily. MDH type 3 family.

It carries out the reaction (S)-malate + NAD(+) = oxaloacetate + NADH + H(+). In terms of biological role, catalyzes the reversible oxidation of malate to oxaloacetate. This chain is Malate dehydrogenase, found in Rhodospirillum centenum (strain ATCC 51521 / SW).